A 447-amino-acid polypeptide reads, in one-letter code: ATP-dependent protease ATPase subunit HslU (447 aa).

ATP is bound by residues Ile-17, 59–64 (GVGKTE), Asp-256, Glu-321, and Arg-393.

Belongs to the ClpX chaperone family. HslU subfamily. As to quaternary structure, a double ring-shaped homohexamer of HslV is capped on each side by a ring-shaped HslU homohexamer. The assembly of the HslU/HslV complex is dependent on binding of ATP.

It is found in the cytoplasm. In terms of biological role, ATPase subunit of a proteasome-like degradation complex; this subunit has chaperone activity. The binding of ATP and its subsequent hydrolysis by HslU are essential for unfolding of protein substrates subsequently hydrolyzed by HslV. HslU recognizes the N-terminal part of its protein substrates and unfolds these before they are guided to HslV for hydrolysis. This is ATP-dependent protease ATPase subunit HslU from Pseudomonas putida (strain W619).